The following is a 95-amino-acid chain: Aspartyl/glutamyl-tRNA(Asn/Gln) amidotransferase subunit C (95 aa).

Belongs to the GatC family. In terms of assembly, heterotrimer of A, B and C subunits.

The catalysed reaction is L-glutamyl-tRNA(Gln) + L-glutamine + ATP + H2O = L-glutaminyl-tRNA(Gln) + L-glutamate + ADP + phosphate + H(+). It carries out the reaction L-aspartyl-tRNA(Asn) + L-glutamine + ATP + H2O = L-asparaginyl-tRNA(Asn) + L-glutamate + ADP + phosphate + 2 H(+). In terms of biological role, allows the formation of correctly charged Asn-tRNA(Asn) or Gln-tRNA(Gln) through the transamidation of misacylated Asp-tRNA(Asn) or Glu-tRNA(Gln) in organisms which lack either or both of asparaginyl-tRNA or glutaminyl-tRNA synthetases. The reaction takes place in the presence of glutamine and ATP through an activated phospho-Asp-tRNA(Asn) or phospho-Glu-tRNA(Gln). This Ectopseudomonas mendocina (strain ymp) (Pseudomonas mendocina) protein is Aspartyl/glutamyl-tRNA(Asn/Gln) amidotransferase subunit C.